We begin with the raw amino-acid sequence, 113 residues long: Large ribosomal subunit protein bL20c (113 aa).

It belongs to the bacterial ribosomal protein bL20 family.

It localises to the plastid. The protein resides in the chloroplast. In terms of biological role, binds directly to 23S ribosomal RNA and is necessary for the in vitro assembly process of the 50S ribosomal subunit. It is not involved in the protein synthesizing functions of that subunit. This Staurastrum punctulatum (Green alga) protein is Large ribosomal subunit protein bL20c.